A 598-amino-acid chain; its full sequence is MLSSWQKKFFQTPEHPPAEGIAPPRDDGVPNPEPVTYPDTKYPSDVVNHDAGEMLPNEEAQDGVTQAEAITLTWSKISLGAAYFLMWLLYLVNGFQASITGNLSAYVTSGFESHSLIPVISIVSSVMSAATYMPLAKVLNLWDRSIGFIIMVAFATLGLILSATCHDIGTYCAAQVFYSIGFAGIIFSVDVITADTSTLRDRGLAYAFTSSPYIITAFGGPAAAEHFYDSNWRWAYGCFSIVLPVVALPMFCLLRWNRHKAKKSGLLKDKADSGRTWMESIRHYIIEFDILGVFFLAAGLVLFLLPFSIAGSTEDDWKSASIITMLVIGFVCLLVFALVERFVAPVPFLPWALLASRTVLGACMLDVCYQIAYYCWFNYYTSYLQVVYGTSITTAGYITSIFDVVSGVWLFIVGFLIKKTNRFRWLLFIAVPLYILGVGLMIYFRKPSWSVGYMIMCQIFIAFAGGTMIICQQVAVLAASDHDHAASSLAFLNVFGTMGSAVGSSISGAIWTHTLPGALQRLLPDSVKADWQTIYDSLEEQLSYERGTLIRQAIALAYASTQSKMLIAGTAIMALSLVWMFVIRDIKLTKTQTKGVLF.

The segment at 1 to 34 (MLSSWQKKFFQTPEHPPAEGIAPPRDDGVPNPEP) is disordered. Over 1–76 (MLSSWQKKFF…AEAITLTWSK (76 aa)) the chain is Cytoplasmic. The helical transmembrane segment at 77–97 (ISLGAAYFLMWLLYLVNGFQA) threads the bilayer. At 98 to 115 (SITGNLSAYVTSGFESHS) the chain is on the extracellular side. Asn102 is a glycosylation site (N-linked (GlcNAc...) asparagine). The helical transmembrane segment at 116–136 (LIPVISIVSSVMSAATYMPLA) threads the bilayer. The Cytoplasmic segment spans residues 137–144 (KVLNLWDR). A helical transmembrane segment spans residues 145–165 (SIGFIIMVAFATLGLILSATC). The Extracellular portion of the chain corresponds to 166-171 (HDIGTY). Residues 172-192 (CAAQVFYSIGFAGIIFSVDVI) form a helical membrane-spanning segment. Residues 193-203 (TADTSTLRDRG) lie on the Cytoplasmic side of the membrane. Residues 204-224 (LAYAFTSSPYIITAFGGPAAA) form a helical membrane-spanning segment. The Extracellular portion of the chain corresponds to 225-233 (EHFYDSNWR). Residues 234 to 254 (WAYGCFSIVLPVVALPMFCLL) traverse the membrane as a helical segment. Residues 255–289 (RWNRHKAKKSGLLKDKADSGRTWMESIRHYIIEFD) lie on the Cytoplasmic side of the membrane. The helical transmembrane segment at 290-310 (ILGVFFLAAGLVLFLLPFSIA) threads the bilayer. The Extracellular segment spans residues 311–318 (GSTEDDWK). The helical transmembrane segment at 319–339 (SASIITMLVIGFVCLLVFALV) threads the bilayer. Residues 340–341 (ER) are Cytoplasmic-facing. A helical membrane pass occupies residues 342–362 (FVAPVPFLPWALLASRTVLGA). At 363 to 396 (CMLDVCYQIAYYCWFNYYTSYLQVVYGTSITTAG) the chain is on the extracellular side. A helical transmembrane segment spans residues 397-417 (YITSIFDVVSGVWLFIVGFLI). At 418–424 (KKTNRFR) the chain is on the cytoplasmic side. The helical transmembrane segment at 425–445 (WLLFIAVPLYILGVGLMIYFR) threads the bilayer. The Extracellular segment spans residues 446 to 450 (KPSWS). Residues 451 to 471 (VGYMIMCQIFIAFAGGTMIIC) form a helical membrane-spanning segment. Topologically, residues 472 to 490 (QQVAVLAASDHDHAASSLA) are cytoplasmic. Residues 491–511 (FLNVFGTMGSAVGSSISGAIW) form a helical membrane-spanning segment. Residues 512–562 (THTLPGALQRLLPDSVKADWQTIYDSLEEQLSYERGTLIRQAIALAYASTQ) are Extracellular-facing. A helical transmembrane segment spans residues 563-583 (SKMLIAGTAIMALSLVWMFVI). Residues 584–598 (RDIKLTKTQTKGVLF) lie on the Cytoplasmic side of the membrane.

This sequence belongs to the major facilitator superfamily.

It localises to the cell membrane. Its function is as follows. Major facilitator transporter involved in fusarinine C (FsC) uptake. In contrast to TAFC-mediated iron uptake, FsC-mediated iron uptake via mirD does not play a significant role during infection. The protein is MFS siderochrome iron transporter D of Aspergillus fumigatus (strain ATCC MYA-4609 / CBS 101355 / FGSC A1100 / Af293) (Neosartorya fumigata).